A 488-amino-acid polypeptide reads, in one-letter code: Catalase (488 aa).

The segment at methionine 1 to arginine 26 is disordered. Positions leucine 7–threonine 23 are enriched in polar residues. Catalysis depends on residues histidine 55 and asparagine 128. Tyrosine 338 provides a ligand contact to heme.

Belongs to the catalase family. Heme serves as cofactor.

It is found in the cytoplasm. It carries out the reaction 2 H2O2 = O2 + 2 H2O. Functionally, decomposes hydrogen peroxide into water and oxygen; serves to protect cells from the toxic effects of hydrogen peroxide. The sequence is that of Catalase (kat) from Listeria monocytogenes serovar 1/2a (strain ATCC BAA-679 / EGD-e).